The following is a 412-amino-acid chain: MQVYLVGGAVRDYLLGHPYQEKDYVVVGATPEHMLAQGFQPVGKDFPVFLHPETKEEYALARTERKSGQGYHGFQFFTDTTVSLEDDLIRRDLTINAIAMDQDGKIYDPYGGQNDLENKILRHVSEAFAEDPLRVLRVARFAARYFPYGFQIAPETLQLMQTMADSGELDALTPERVWKETSRALMENHADIYFQTLRDCGALKHLFPEIDALFGVPQRPEYHPEVDCGIHTLMSLQQACKSNYSLDVRFAVLVHDLGKALTPAEELPRHIMHEERGIKPVTQLCERLRVPTQTKQLALSVCKEHLKCHQIMSLKPGTLWRLLQRLDVLRRPERVEAFVQACECDAKGRLGLEDRPYPQAQYMREAMQIVRSIKVQDLPENIKGAEIGEMLIQYRIEALAEFKNQHQSLSHS.

Residues Gly-8 and Arg-11 each coordinate ATP. Gly-8 and Arg-11 together coordinate CTP. Glu-21 and Asp-23 together coordinate Mg(2+). Positions 91, 137, and 140 each coordinate ATP. Residues Arg-91, Arg-137, and Arg-140 each contribute to the CTP site. In terms of domain architecture, HD spans 228 to 329; it reads CGIHTLMSLQ…WRLLQRLDVL (102 aa).

This sequence belongs to the tRNA nucleotidyltransferase/poly(A) polymerase family. Bacterial CCA-adding enzyme type 1 subfamily. As to quaternary structure, monomer. Can also form homodimers and oligomers. Mg(2+) is required as a cofactor. The cofactor is Ni(2+).

It carries out the reaction a tRNA precursor + 2 CTP + ATP = a tRNA with a 3' CCA end + 3 diphosphate. It catalyses the reaction a tRNA with a 3' CCA end + 2 CTP + ATP = a tRNA with a 3' CCACCA end + 3 diphosphate. Its function is as follows. Catalyzes the addition and repair of the essential 3'-terminal CCA sequence in tRNAs without using a nucleic acid template. Adds these three nucleotides in the order of C, C, and A to the tRNA nucleotide-73, using CTP and ATP as substrates and producing inorganic pyrophosphate. tRNA 3'-terminal CCA addition is required both for tRNA processing and repair. Also involved in tRNA surveillance by mediating tandem CCA addition to generate a CCACCA at the 3' terminus of unstable tRNAs. While stable tRNAs receive only 3'-terminal CCA, unstable tRNAs are marked with CCACCA and rapidly degraded. The sequence is that of Multifunctional CCA protein from Acinetobacter baumannii (strain AB307-0294).